The primary structure comprises 271 residues: Colicin-M (271 aa).

The TonB box signature appears at 2 to 9 (ETLTVHAP).

Functionally, colicins are polypeptide toxins produced by and active against E.coli and closely related bacteria. In terms of biological role, this is a calcium-requiring inhibitor for murein biosynthesis; it causes lysis of sensitive cells accompanied by murein degradation. The target site is possibly the cytoplasmic membrane. The chain is Colicin-M (cma) from Escherichia coli.